The following is a 189-amino-acid chain: Crossover junction endodeoxyribonuclease RuvC (189 aa).

Residues Asp7, Glu68, and Asp141 contribute to the active site. Mg(2+)-binding residues include Asp7, Glu68, and Asp141.

Belongs to the RuvC family. Homodimer which binds Holliday junction (HJ) DNA. The HJ becomes 2-fold symmetrical on binding to RuvC with unstacked arms; it has a different conformation from HJ DNA in complex with RuvA. In the full resolvosome a probable DNA-RuvA(4)-RuvB(12)-RuvC(2) complex forms which resolves the HJ. Requires Mg(2+) as cofactor.

The protein resides in the cytoplasm. It catalyses the reaction Endonucleolytic cleavage at a junction such as a reciprocal single-stranded crossover between two homologous DNA duplexes (Holliday junction).. The RuvA-RuvB-RuvC complex processes Holliday junction (HJ) DNA during genetic recombination and DNA repair. Endonuclease that resolves HJ intermediates. Cleaves cruciform DNA by making single-stranded nicks across the HJ at symmetrical positions within the homologous arms, yielding a 5'-phosphate and a 3'-hydroxyl group; requires a central core of homology in the junction. The consensus cleavage sequence is 5'-(A/T)TT(C/G)-3'. Cleavage occurs on the 3'-side of the TT dinucleotide at the point of strand exchange. HJ branch migration catalyzed by RuvA-RuvB allows RuvC to scan DNA until it finds its consensus sequence, where it cleaves and resolves the cruciform DNA. The sequence is that of Crossover junction endodeoxyribonuclease RuvC from Nocardia farcinica (strain IFM 10152).